Reading from the N-terminus, the 223-residue chain is Ribonuclease T (223 aa).

Residues 1–11 (MSDDHFDDEQE) show a composition bias toward acidic residues. The disordered stretch occupies residues 1–21 (MSDDHFDDEQEGSSGGPRHPM). Positions 31–205 (VVVDVETGGF…YDTEKTAELF (175 aa)) constitute an Exonuclease domain. Mg(2+) contacts are provided by Asp-34, Glu-36, His-192, and Asp-197. His-192 functions as the Proton donor/acceptor in the catalytic mechanism.

This sequence belongs to the RNase T family. In terms of assembly, homodimer. Requires Mg(2+) as cofactor.

Its function is as follows. Trims short 3' overhangs of a variety of RNA species, leaving a one or two nucleotide 3' overhang. Responsible for the end-turnover of tRNA: specifically removes the terminal AMP residue from uncharged tRNA (tRNA-C-C-A). Also appears to be involved in tRNA biosynthesis. This Pseudomonas fluorescens (strain ATCC BAA-477 / NRRL B-23932 / Pf-5) protein is Ribonuclease T.